Consider the following 78-residue polypeptide: Putative antitoxin PF1222 (78 aa).

This sequence belongs to the UPF0330 family.

Its function is as follows. Possibly the antitoxin component of a type II toxin-antitoxin (TA) system. The sequence is that of Putative antitoxin PF1222 from Pyrococcus furiosus (strain ATCC 43587 / DSM 3638 / JCM 8422 / Vc1).